Here is an 804-residue protein sequence, read N- to C-terminus: Probable phosphoketolase (804 aa).

The protein belongs to the XFP family. Thiamine diphosphate serves as cofactor.

This is Probable phosphoketolase from Mycolicibacterium paratuberculosis (strain ATCC BAA-968 / K-10) (Mycobacterium paratuberculosis).